A 130-amino-acid polypeptide reads, in one-letter code: Fumarate reductase subunit C (130 aa).

The next 3 membrane-spanning stretches (helical) occupy residues 30 to 50, 60 to 80, and 110 to 130; these read EGTS…VFSL, FVSF…LFAA, and IKAL…VALL.

This sequence belongs to the FrdC family. As to quaternary structure, part of an enzyme complex containing four subunits: a flavoprotein (FrdA), an iron-sulfur protein (FrdB), and two hydrophobic anchor proteins (FrdC and FrdD).

It is found in the cell inner membrane. Its function is as follows. Two distinct, membrane-bound, FAD-containing enzymes are responsible for the catalysis of fumarate and succinate interconversion; fumarate reductase is used in anaerobic growth, and succinate dehydrogenase is used in aerobic growth. Anchors the catalytic components of the fumarate reductase complex to the cell inner membrane, binds quinones. This chain is Fumarate reductase subunit C, found in Yersinia pestis bv. Antiqua (strain Angola).